A 334-amino-acid chain; its full sequence is Aspartate carbamoyltransferase catalytic subunit (334 aa).

Residues Arg71 and Thr72 each coordinate carbamoyl phosphate. Lys99 is an L-aspartate binding site. Carbamoyl phosphate-binding residues include Arg121, His151, and Gln154. L-aspartate is bound by residues Arg184 and Arg239. Positions 280 and 281 each coordinate carbamoyl phosphate.

It belongs to the aspartate/ornithine carbamoyltransferase superfamily. ATCase family. Heterododecamer (2C3:3R2) of six catalytic PyrB chains organized as two trimers (C3), and six regulatory PyrI chains organized as three dimers (R2).

It carries out the reaction carbamoyl phosphate + L-aspartate = N-carbamoyl-L-aspartate + phosphate + H(+). It functions in the pathway pyrimidine metabolism; UMP biosynthesis via de novo pathway; (S)-dihydroorotate from bicarbonate: step 2/3. Functionally, catalyzes the condensation of carbamoyl phosphate and aspartate to form carbamoyl aspartate and inorganic phosphate, the committed step in the de novo pyrimidine nucleotide biosynthesis pathway. This chain is Aspartate carbamoyltransferase catalytic subunit, found in Pseudomonas fluorescens biotype A.